The primary structure comprises 355 residues: tRNA-specific 2-thiouridylase MnmA (355 aa).

Residues 8 to 15 (GMSGGVDS) and M34 contribute to the ATP site. C103 functions as the Nucleophile in the catalytic mechanism. C103 and C199 are disulfide-bonded. G127 lines the ATP pocket. The interaction with tRNA stretch occupies residues 149 to 151 (KDQ). Residue C199 is the Cysteine persulfide intermediate of the active site. Positions 305–306 (RY) are interaction with tRNA.

The protein belongs to the MnmA/TRMU family.

It is found in the cytoplasm. It carries out the reaction S-sulfanyl-L-cysteinyl-[protein] + uridine(34) in tRNA + AH2 + ATP = 2-thiouridine(34) in tRNA + L-cysteinyl-[protein] + A + AMP + diphosphate + H(+). Functionally, catalyzes the 2-thiolation of uridine at the wobble position (U34) of tRNA, leading to the formation of s(2)U34. The sequence is that of tRNA-specific 2-thiouridylase MnmA from Clostridium acetobutylicum (strain ATCC 824 / DSM 792 / JCM 1419 / IAM 19013 / LMG 5710 / NBRC 13948 / NRRL B-527 / VKM B-1787 / 2291 / W).